The following is a 370-amino-acid chain: 3-isopropylmalate dehydrogenase (370 aa).

Residue 77 to 90 (GPKWDSVPYEVRPE) coordinates NAD(+). Substrate-binding residues include R97, R107, R135, and D226. 3 residues coordinate Mg(2+): D226, D250, and D254. 290–302 (GSAPDIAGKGIAN) lines the NAD(+) pocket.

The protein belongs to the isocitrate and isopropylmalate dehydrogenases family. LeuB type 1 subfamily. In terms of assembly, homodimer. Mg(2+) is required as a cofactor. Mn(2+) serves as cofactor.

Its subcellular location is the cytoplasm. The catalysed reaction is (2R,3S)-3-isopropylmalate + NAD(+) = 4-methyl-2-oxopentanoate + CO2 + NADH. Its pathway is amino-acid biosynthesis; L-leucine biosynthesis; L-leucine from 3-methyl-2-oxobutanoate: step 3/4. Its function is as follows. Catalyzes the oxidation of 3-carboxy-2-hydroxy-4-methylpentanoate (3-isopropylmalate) to 3-carboxy-4-methyl-2-oxopentanoate. The product decarboxylates to 4-methyl-2 oxopentanoate. This is 3-isopropylmalate dehydrogenase from Brucella suis biovar 1 (strain 1330).